The primary structure comprises 180 residues: Large ribosomal subunit protein uL6 (180 aa).

This sequence belongs to the universal ribosomal protein uL6 family. In terms of assembly, part of the 50S ribosomal subunit.

Its function is as follows. This protein binds to the 23S rRNA, and is important in its secondary structure. It is located near the subunit interface in the base of the L7/L12 stalk, and near the tRNA binding site of the peptidyltransferase center. The protein is Large ribosomal subunit protein uL6 of Clostridium kluyveri (strain NBRC 12016).